Reading from the N-terminus, the 444-residue chain is Tubulin beta chain (444 aa).

Residues Q11, E69, S138, G142, T143, G144, N204, and N226 each contribute to the GTP site. Mg(2+) is bound at residue E69.

Belongs to the tubulin family. In terms of assembly, dimer of alpha and beta chains. A typical microtubule is a hollow water-filled tube with an outer diameter of 25 nm and an inner diameter of 15 nM. Alpha-beta heterodimers associate head-to-tail to form protofilaments running lengthwise along the microtubule wall with the beta-tubulin subunit facing the microtubule plus end conferring a structural polarity. Microtubules usually have 13 protofilaments but different protofilament numbers can be found in some organisms and specialized cells. Mg(2+) is required as a cofactor.

It localises to the cytoplasm. Its subcellular location is the cytoskeleton. In terms of biological role, tubulin is the major constituent of microtubules, a cylinder consisting of laterally associated linear protofilaments composed of alpha- and beta-tubulin heterodimers. Microtubules grow by the addition of GTP-tubulin dimers to the microtubule end, where a stabilizing cap forms. Below the cap, tubulin dimers are in GDP-bound state, owing to GTPase activity of alpha-tubulin. The polypeptide is Tubulin beta chain (TBB) (Onchocerca gibsoni).